Reading from the N-terminus, the 79-residue chain is Sec-independent protein translocase protein TatA (79 aa).

A helical transmembrane segment spans residues 1–21; that stretch reads MGSLSIWHWLIVLLIVALVFG. A disordered region spans residues 46 to 79; that stretch reads ADAPAAEAQQRELPRNGAVDVEAKEKTPRSGDYR. Positions 66-79 are enriched in basic and acidic residues; it reads VEAKEKTPRSGDYR.

The protein belongs to the TatA/E family. As to quaternary structure, the Tat system comprises two distinct complexes: a TatABC complex, containing multiple copies of TatA, TatB and TatC subunits, and a separate TatA complex, containing only TatA subunits. Substrates initially bind to the TatABC complex, which probably triggers association of the separate TatA complex to form the active translocon.

The protein localises to the cell inner membrane. In terms of biological role, part of the twin-arginine translocation (Tat) system that transports large folded proteins containing a characteristic twin-arginine motif in their signal peptide across membranes. TatA could form the protein-conducting channel of the Tat system. This chain is Sec-independent protein translocase protein TatA, found in Paraburkholderia phytofirmans (strain DSM 17436 / LMG 22146 / PsJN) (Burkholderia phytofirmans).